The following is a 256-amino-acid chain: Ribonuclease HII (256 aa).

The region spanning Ala-72–Lys-256 is the RNase H type-2 domain. Residues Asp-78, Glu-79, and Asp-170 each contribute to the a divalent metal cation site.

This sequence belongs to the RNase HII family. Mn(2+) is required as a cofactor. It depends on Mg(2+) as a cofactor.

It localises to the cytoplasm. The catalysed reaction is Endonucleolytic cleavage to 5'-phosphomonoester.. In terms of biological role, endonuclease that specifically degrades the RNA of RNA-DNA hybrids. The polypeptide is Ribonuclease HII (Staphylococcus epidermidis (strain ATCC 12228 / FDA PCI 1200)).